The following is a 261-amino-acid chain: Ribonuclease HII (261 aa).

Over residues 1–20 (MIRDKSAKRPAKDAPKKAAV) the composition is skewed to basic and acidic residues. Residues 1–23 (MIRDKSAKRPAKDAPKKAAVKEA) form a disordered region. One can recognise an RNase H type-2 domain in the interval 42–230 (WPVAGCDEAG…VAAARAKHMP (189 aa)). Residues D48, E49, and D139 each coordinate a divalent metal cation.

Belongs to the RNase HII family. The cofactor is Mn(2+). Mg(2+) serves as cofactor.

The protein resides in the cytoplasm. It catalyses the reaction Endonucleolytic cleavage to 5'-phosphomonoester.. Functionally, endonuclease that specifically degrades the RNA of RNA-DNA hybrids. In Bradyrhizobium diazoefficiens (strain JCM 10833 / BCRC 13528 / IAM 13628 / NBRC 14792 / USDA 110), this protein is Ribonuclease HII.